A 162-amino-acid polypeptide reads, in one-letter code: Phosphopantetheine adenylyltransferase (162 aa).

Residue serine 11 coordinates substrate. Residues 11 to 12 (SF) and histidine 19 contribute to the ATP site. Lysine 43, threonine 75, and arginine 89 together coordinate substrate. ATP-binding positions include 90–92 (GLR), glutamate 100, and 125–131 (YAFLSSS).

It belongs to the bacterial CoaD family. Homohexamer. Mg(2+) is required as a cofactor.

The protein localises to the cytoplasm. The enzyme catalyses (R)-4'-phosphopantetheine + ATP + H(+) = 3'-dephospho-CoA + diphosphate. It participates in cofactor biosynthesis; coenzyme A biosynthesis; CoA from (R)-pantothenate: step 4/5. Reversibly transfers an adenylyl group from ATP to 4'-phosphopantetheine, yielding dephospho-CoA (dPCoA) and pyrophosphate. This chain is Phosphopantetheine adenylyltransferase, found in Finegoldia magna (strain ATCC 29328 / DSM 20472 / WAL 2508) (Peptostreptococcus magnus).